Here is a 700-residue protein sequence, read N- to C-terminus: Calpain-2 catalytic subunit (700 aa).

Ala-2 carries the N-acetylalanine modification. Positions 2–19 (AGIAMKLAKDREAAEGLG) are cleaved as a propeptide — anchors to the small subunit. In terms of domain architecture, Calpain catalytic spans 45–344 (LFQDPSFPAL…YSRLEICNLT (300 aa)). Ca(2+)-binding residues include Ile-89, Gly-91, and Asp-96. Cys-105 is an active-site residue. Ca(2+) is bound by residues Glu-175, Gln-229, and Lys-230. Catalysis depends on residues His-262 and Asn-286. Ca(2+) is bound by residues Glu-292, Asp-299, Gln-319, and Glu-323. The domain III stretch occupies residues 345-514 (PDTLTCDSYK…KKADYQTVDD (170 aa)). Positions 515–529 (EIEANIEEIEANEED) are linker. Residues 530–700 (IGDGFRRLFA…LISWLSFSVL (171 aa)) are domain IV. Ca(2+) is bound by residues Ala-542, Asp-545, Glu-547, Glu-552, Asp-585, Asp-587, Ser-589, Lys-591, Glu-596, Asp-615, Asp-617, Ser-619, Thr-621, Glu-626, Asp-658, and Asn-661. 2 consecutive EF-hand domains span residues 572–605 (FSIE…TKIQ) and 602–637 (TKIQ…AGFK). Positions 667–700 (VRLEILFKIFKQLDPENTGTIQLDLISWLSFSVL) constitute an EF-hand 3 domain.

This sequence belongs to the peptidase C2 family. In terms of assembly, forms a heterodimer with a small (regulatory) subunit (CAPNS1). Interacts with CPEB3; this leads to cleavage of CPEB3. Ca(2+) is required as a cofactor. Ubiquitous.

The protein resides in the cytoplasm. It localises to the cell membrane. It catalyses the reaction Broad endopeptidase specificity.. With respect to regulation, activated by 200-1000 micromolar concentrations of calcium and inhibited by calpastatin. Calcium-regulated non-lysosomal thiol-protease which catalyze limited proteolysis of substrates involved in cytoskeletal remodeling and signal transduction. Proteolytically cleaves MYOC at 'Arg-226'. Proteolytically cleaves CPEB3 following neuronal stimulation which abolishes CPEB3 translational repressor activity, leading to translation of CPEB3 target mRNAs. The chain is Calpain-2 catalytic subunit (Capn2) from Rattus norvegicus (Rat).